We begin with the raw amino-acid sequence, 50 residues long: Large ribosomal subunit protein eL39 (50 aa).

It belongs to the eukaryotic ribosomal protein eL39 family.

The polypeptide is Large ribosomal subunit protein eL39 (rpl39e) (Archaeoglobus fulgidus (strain ATCC 49558 / DSM 4304 / JCM 9628 / NBRC 100126 / VC-16)).